Reading from the N-terminus, the 631-residue chain is Chaperone protein HtpG (631 aa).

The interval 1 to 339 is a; substrate-binding; that stretch reads MSAQKETLGF…SNDLPLNVSR (339 aa). The b stretch occupies residues 340–556; sequence EILQESKDID…EHDMSAHLER (217 aa). Positions 557–631 are c; it reads MLKAAGQKIE…INKLMLELSV (75 aa).

It belongs to the heat shock protein 90 family. As to quaternary structure, homodimer.

It is found in the cytoplasm. In terms of biological role, molecular chaperone. Has ATPase activity. The chain is Chaperone protein HtpG from Chromobacterium violaceum (strain ATCC 12472 / DSM 30191 / JCM 1249 / CCUG 213 / NBRC 12614 / NCIMB 9131 / NCTC 9757 / MK).